A 389-amino-acid chain; its full sequence is Chalcone synthase H2 (389 aa).

Cys-164 is an active-site residue.

Belongs to the thiolase-like superfamily. Chalcone/stilbene synthases family.

It is found in the cytoplasm. The catalysed reaction is (E)-4-coumaroyl-CoA + 3 malonyl-CoA + 3 H(+) = 2',4,4',6'-tetrahydroxychalcone + 3 CO2 + 4 CoA. It functions in the pathway secondary metabolite biosynthesis; flavonoid biosynthesis. Its function is as follows. Involved in the biosynthesis of prenylated phenolics natural products which contribute to the bitter taste of beer and display broad biological activities. Chalcone synthase that can use 4-coumaroyl-CoA to produce 4,2',4',6'-tetrahydroxychalcone (also termed naringenin-chalcone or chalcone) which can, under specific conditions, spontaneously isomerize into naringenin. This Humulus lupulus (European hop) protein is Chalcone synthase H2.